The chain runs to 237 residues: Zinc finger protein 22 (237 aa).

The tract at residues methionine 1 to tryptophan 33 is disordered. Lysine 18 and lysine 23 each carry N6-acetyllysine. 5 C2H2-type zinc fingers span residues tyrosine 55–serine 82, histidine 83–proline 110, tyrosine 111–proline 138, tyrosine 139–proline 166, and tyrosine 167–serine 194. The segment covering valine 188 to lysine 217 has biased composition (basic residues). The tract at residues valine 188–alanine 218 is disordered.

This sequence belongs to the krueppel C2H2-type zinc-finger protein family. In terms of tissue distribution, highly expressed in the ameloblast layer of mandibular incisors, moderately expressed in submandibular gland, calvaria, kidney and lung, and expressed at low levels in brain and thymus.

Its subcellular location is the nucleus. Its function is as follows. Binds DNA through the consensus sequence 5'-CAATG-3'. May be involved in transcriptional regulation and may play a role in tooth formation. This Rattus norvegicus (Rat) protein is Zinc finger protein 22 (Znf22).